The following is a 399-amino-acid chain: Phosphoglycerate kinase (399 aa).

Residues 21-23 (DFN), Arg36, 59-62 (HLGR), Arg120, and Arg158 each bind substrate. ATP-binding positions include Lys209, Gly297, Glu328, and 355-358 (GGDS).

Belongs to the phosphoglycerate kinase family. Monomer.

The protein localises to the cytoplasm. It carries out the reaction (2R)-3-phosphoglycerate + ATP = (2R)-3-phospho-glyceroyl phosphate + ADP. Its pathway is carbohydrate degradation; glycolysis; pyruvate from D-glyceraldehyde 3-phosphate: step 2/5. In Streptococcus thermophilus (strain ATCC BAA-491 / LMD-9), this protein is Phosphoglycerate kinase.